The following is a 314-amino-acid chain: MAKGIMLHEVGEQVDQYFLIKSSTKGIASNGKPFLTLMLQDQSGDIEAKLWDAKPTDETTYAAQTIVKVIGDVHHYRGRNQLKLRNIRPAGENENVSIDDFLETAPIPKNEMMETVTQYIFEMKNPNIQRITRHLVKKYAAEFMDYPAAAKNHHEFVSGLAYHVVSMLNLAKAIADLYPSLDRDLLYAGVILHDLGKVKELSGPVSTTYTVEGNLLGHISIMVTELSKAAEELQIDAEEVLILKHLILSHHGKAEWGSPKPPMVKEAEILHYIDNLDAKMIMMDRALERVKPGEYTERVFALENRSFYKPTFHQ.

The HD domain occupies 163 to 279 (HVVSMLNLAK…LHYIDNLDAK (117 aa)).

It belongs to the YhaM family.

Shows a 3'-5' exoribonuclease activity. The chain is 3'-5' exoribonuclease YhaM from Bacillus velezensis (strain DSM 23117 / BGSC 10A6 / LMG 26770 / FZB42) (Bacillus amyloliquefaciens subsp. plantarum).